Reading from the N-terminus, the 124-residue chain is Large ribosomal subunit protein bL12 (124 aa).

Residues 93–124 (GAPSTVKEGASKDEAEEAKKKLEEAGASVELK) form a disordered region. Over residues 101–116 (GASKDEAEEAKKKLEE) the composition is skewed to basic and acidic residues.

This sequence belongs to the bacterial ribosomal protein bL12 family. In terms of assembly, homodimer. Part of the ribosomal stalk of the 50S ribosomal subunit. Forms a multimeric L10(L12)X complex, where L10 forms an elongated spine to which 2 to 4 L12 dimers bind in a sequential fashion. Binds GTP-bound translation factors.

Functionally, forms part of the ribosomal stalk which helps the ribosome interact with GTP-bound translation factors. Is thus essential for accurate translation. This chain is Large ribosomal subunit protein bL12, found in Marinobacter nauticus (strain ATCC 700491 / DSM 11845 / VT8) (Marinobacter aquaeolei).